Consider the following 239-residue polypeptide: Protein GrpE (239 aa).

Disordered stretches follow at residues 1 to 54 (MIEN…ELKN) and 208 to 239 (SMGP…SEDV). The span at 19–42 (QDNALENVSSAQELTTENNELSSQ) shows a compositional bias: polar residues. Residues 43-53 (KTEEINTEELK) are compositionally biased toward basic and acidic residues. The segment covering 228 to 239 (DIDSEENTSEDV) has biased composition (acidic residues).

It belongs to the GrpE family. As to quaternary structure, homodimer.

Its subcellular location is the cytoplasm. Functionally, participates actively in the response to hyperosmotic and heat shock by preventing the aggregation of stress-denatured proteins, in association with DnaK and GrpE. It is the nucleotide exchange factor for DnaK and may function as a thermosensor. Unfolded proteins bind initially to DnaJ; upon interaction with the DnaJ-bound protein, DnaK hydrolyzes its bound ATP, resulting in the formation of a stable complex. GrpE releases ADP from DnaK; ATP binding to DnaK triggers the release of the substrate protein, thus completing the reaction cycle. Several rounds of ATP-dependent interactions between DnaJ, DnaK and GrpE are required for fully efficient folding. The chain is Protein GrpE from Prochlorococcus marinus (strain AS9601).